We begin with the raw amino-acid sequence, 326 residues long: rRNA 2'-O-methyltransferase fibrillarin (326 aa).

Residues 1-84 (MAFQPGSRGG…GGARGGAKGG (84 aa)) form a disordered region. Gly residues predominate over residues 7–83 (SRGGRGGARG…RGGARGGAKG (77 aa)). Asymmetric dimethylarginine is present on residues Arg8, Arg11, Arg15, Arg19, Arg23, Arg26, Arg32, Arg36, Arg39, Arg45, Arg49, Arg55, Arg59, Arg63, Arg67, Arg71, Arg74, and Arg78. S-adenosyl-L-methionine is bound by residues 180–181 (TS), 199–200 (EF), 224–225 (DA), and 244–247 (DVAQ).

It belongs to the methyltransferase superfamily. Fibrillarin family. As to quaternary structure, component of box C/D small nucleolar ribonucleoprotein (snoRNP) particles that contain SNU13, NOP1, SIK1/NOP56 and NOP58, plus a guide RNA. In terms of processing, by homology to other fibrillarins, some or all of the N-terminal domain arginines are modified to asymmetric dimethylarginine (DMA).

The protein localises to the nucleus. It is found in the nucleolus. It carries out the reaction L-glutaminyl-[histone H2A] + S-adenosyl-L-methionine = N(5)-methyl-L-glutaminyl-[histone H2A] + S-adenosyl-L-homocysteine + H(+). Functionally, S-adenosyl-L-methionine-dependent methyltransferase that has the ability to methylate both RNAs and proteins. Involved in pre-rRNA processing. Utilizes the methyl donor S-adenosyl-L-methionine to catalyze the site-specific 2'-hydroxyl methylation of ribose moieties in pre-ribosomal RNA. Site specificity is provided by a guide RNA that base pairs with the substrate. Methylation occurs at a characteristic distance from the sequence involved in base pairing with the guide RNA. Also acts as a protein methyltransferase by mediating methylation of 'Gln-105' of histone H2A (H2AQ105me), a modification that impairs binding of the FACT complex and is specifically present at 35S ribosomal DNA locus. The chain is rRNA 2'-O-methyltransferase fibrillarin (NOP1) from Eremothecium gossypii (strain ATCC 10895 / CBS 109.51 / FGSC 9923 / NRRL Y-1056) (Yeast).